Here is a 171-residue protein sequence, read N- to C-terminus: Adenine phosphoribosyltransferase (171 aa).

This sequence belongs to the purine/pyrimidine phosphoribosyltransferase family. Homodimer.

It is found in the cytoplasm. It carries out the reaction AMP + diphosphate = 5-phospho-alpha-D-ribose 1-diphosphate + adenine. It functions in the pathway purine metabolism; AMP biosynthesis via salvage pathway; AMP from adenine: step 1/1. Its function is as follows. Catalyzes a salvage reaction resulting in the formation of AMP, that is energically less costly than de novo synthesis. The protein is Adenine phosphoribosyltransferase of Pelotomaculum thermopropionicum (strain DSM 13744 / JCM 10971 / SI).